A 1174-amino-acid chain; its full sequence is MCPPTIWEKGGQVGARWSLRAPEVSAMAEDGSEEIMFIWCEDCSQYHDSECPELGPVVMVKDSFVLSRARSSLPSNLEIRRLDDGAEGVFAVTQLVKRTQFGPFESRRVAKWEKESAFPLKVFQKDGHPVCFDTSNEDDCNWMMLVRPALEPGHQNLTAYQHGSDVYFTTSKDIPAGTELRVWYAAFYAKKMDKPMLKQACSSVQAAGTPEPSVSVEPERGQWVCKVCSNTFLELQLLNEHLLGHLEQAKSLPAGGQQHEAASEKEPDAPRMEPPTAAESKSIQSVMVTKEPKKKPRRGRKPKASKVEQPLVIIKDKEPSEHVAEIITEIPPDEPVSATPDERIMELVLGKLAAPTNEASSVPKFPHHPSSTIALKRGLVLSSRHGVRRKLVRQLGEHKRIHQCGTCSKVFQNSSNLSRHVRSHGECAHGDKLFKCEECSKLFSRKESLKQHVSYKHSRNEVDGEYRYRCGSCGKTFRMESALEFHNCRTDDKTFQCEMCFRFFSTNSNLSKHKKKHGDKKFACEVCSKMFYRKDVMLDHQRRHLDGVRRVKREDLEASGESLVRYKKEPSGCPVCGKVFSCRSNMNKHLLTHGDKKYTCEICGRKFFRVDVLRDHIHVHFKDIALMDDHQREEFIGKIGISSEENDDNSDESADSEPHKYSCKRCQLTFGRGKEYLKHIMEVHKEKGHGCSICHRRFALKATYHAHMVIHRENLPDPNVQKYIHPCEICGRIFNSIGNLERHKLIHTGVKSHACEQCGKSFARKDMLKEHMRVHDNIREYLCAECGKGMKTKHALRHHMKLHKGIKEYECKECHRKFAQKVNMLKHYKRHTGIKDFMCELCGKTFSERNTMETHKLIHTVGKQWTCSVCDKKYVTEYMLQKHVQLTHDKVEAQSCQLCGTKVSTRASMSRHMRRKHPEVLAVRIDDLDHLPETTTIDASSIGIVQPALGLEQEELAEGKHGKAAKRSHKRKQKPEEEAGAPVPEDTTFSEYPEKEPEFTGSVGDETNSAVQSIQQVVVTLGDPNVTAPSSSVGLTNITVTPITTAAGTQFTNLQPVAVGHLTNPDRQLQLDNSILTVTFDTVSGSAMLHNRQNDVQIHPQPEATNPQSVAHFINLTTLVNSITPLGNQLSEQHPLTWRAVPQTDVLQPPQAPAAPQQAVQPQVQNEQQQMYSY.

The SET domain maps to 75-185; it reads SNLEIRRLDD…AGTELRVWYA (111 aa). The tract at residues 252–307 is disordered; that stretch reads LPAGGQQHEAASEKEPDAPRMEPPTAAESKSIQSVMVTKEPKKKPRRGRKPKASKV. Basic and acidic residues predominate over residues 261 to 271; the sequence is AASEKEPDAPR. Over residues 292–304 the composition is skewed to basic residues; the sequence is PKKKPRRGRKPKA. C2H2-type zinc fingers lie at residues 402–424 and 434–457; these read HQCG…VRSH and FKCE…SYKH. Residues 468–486 form a C2H2-type 3; degenerate zinc finger; the sequence is YRCGSCGKTFRMESALEFH. 2 consecutive C2H2-type zinc fingers follow at residues 495 to 517 and 522 to 544; these read FQCE…KKKH and FACE…QRRH. Lys552 participates in a covalent cross-link: Glycyl lysine isopeptide (Lys-Gly) (interchain with G-Cter in SUMO2). 2 consecutive C2H2-type zinc fingers follow at residues 571-593 and 598-620; these read SGCP…LLTH and YTCE…IHVH. The disordered stretch occupies residues 639-658; that stretch reads IGISSEENDDNSDESADSEP. A compositionally biased stretch (acidic residues) spans 644 to 655; sequence EENDDNSDESAD. 8 consecutive C2H2-type zinc fingers follow at residues 661 to 684, 689 to 711, 725 to 747, 753 to 775, 781 to 803, 809 to 831, 837 to 859, and 865 to 888; these read YSCK…MEVH, HGCS…MVIH, HPCE…KLIH, HACE…MRVH, YLCA…MKLH, YECK…YKRH, FMCE…KLIH, and WTCS…QLTH. Disordered regions lie at residues 957–1007 and 1147–1174; these read AEGK…GDET and LQPP…MYSY. The segment covering 962–973 has biased composition (basic residues); sequence GKAAKRSHKRKQ. Over residues 1154 to 1174 the composition is skewed to low complexity; that stretch reads AAPQQAVQPQVQNEQQQMYSY.

As to expression, expressed in embryonic stem cells (ESCs) (at protein level).

It is found in the nucleus. Sequence-specific DNA-binding transcriptional regulator. Plays a role as a molecular node in a transcriptional network regulating embryonic development and cell fate decision. Stimulates the expression of upstream key transcriptional activators and repressors of the Wnt/beta-catenin and MAPK/ERK pathways, respectively, that are essential for naive pluripotency and self-renewal maintenance of embryonic stem cells (ESCs). Specifically promotes SPRY1 and RSPO1 transcription activation through recognition and direct binding of a specific DNA sequence in their promoter regions. Also plays a role in induced pluripotent stem cells (iPSCs) reprogramming. Involved in early embryo development. This Mus musculus (Mouse) protein is PR domain zinc finger protein 15.